A 412-amino-acid polypeptide reads, in one-letter code: Na(+)/H(+) antiporter NhaA 1 (412 aa).

10 helical membrane-spanning segments follow: residues Val-34–Ala-54, Leu-75–Leu-95, Leu-114–Gly-134, Ala-142–Thr-162, Leu-183–Leu-203, Trp-234–Leu-254, Leu-282–Val-302, Val-309–Ser-329, Leu-349–Leu-369, and Ala-379–Leu-399.

Belongs to the NhaA Na(+)/H(+) (TC 2.A.33) antiporter family.

It localises to the cell membrane. It catalyses the reaction Na(+)(in) + 2 H(+)(out) = Na(+)(out) + 2 H(+)(in). In terms of biological role, na(+)/H(+) antiporter that extrudes sodium in exchange for external protons. In Saccharopolyspora erythraea (strain ATCC 11635 / DSM 40517 / JCM 4748 / NBRC 13426 / NCIMB 8594 / NRRL 2338), this protein is Na(+)/H(+) antiporter NhaA 1.